The following is a 129-amino-acid chain: Large ribosomal subunit protein bL17 (129 aa).

The protein belongs to the bacterial ribosomal protein bL17 family. Part of the 50S ribosomal subunit. Contacts protein L32.

This chain is Large ribosomal subunit protein bL17, found in Polynucleobacter asymbioticus (strain DSM 18221 / CIP 109841 / QLW-P1DMWA-1) (Polynucleobacter necessarius subsp. asymbioticus).